A 434-amino-acid polypeptide reads, in one-letter code: UDP-N-acetylmuramate--L-alanine ligase (434 aa).

ATP is bound at residue 108 to 114 (GSHGKTT).

Belongs to the MurCDEF family.

Its subcellular location is the cytoplasm. The catalysed reaction is UDP-N-acetyl-alpha-D-muramate + L-alanine + ATP = UDP-N-acetyl-alpha-D-muramoyl-L-alanine + ADP + phosphate + H(+). It functions in the pathway cell wall biogenesis; peptidoglycan biosynthesis. In terms of biological role, cell wall formation. The polypeptide is UDP-N-acetylmuramate--L-alanine ligase (Geobacillus thermodenitrificans (strain NG80-2)).